The chain runs to 60 residues: Large ribosomal subunit protein bL33 (60 aa).

This sequence belongs to the bacterial ribosomal protein bL33 family.

In Pelodictyon phaeoclathratiforme (strain DSM 5477 / BU-1), this protein is Large ribosomal subunit protein bL33.